A 33-amino-acid polypeptide reads, in one-letter code: RSGRGECRRQCLRRHEGQPWETQECMRRCRRRG.

As to expression, predominantly in the embryo portion of the kernel.

It localises to the secreted. Functionally, inhibitor of both bacterial and fungal growth in vitro. The sequence is that of Antimicrobial peptide MBP-1 from Zea mays (Maize).